The chain runs to 468 residues: 3-isopropylmalate dehydratase large subunit (468 aa).

Residues Cys-347, Cys-407, and Cys-410 each coordinate [4Fe-4S] cluster.

The protein belongs to the aconitase/IPM isomerase family. LeuC type 1 subfamily. In terms of assembly, heterodimer of LeuC and LeuD. [4Fe-4S] cluster serves as cofactor.

It catalyses the reaction (2R,3S)-3-isopropylmalate = (2S)-2-isopropylmalate. Its pathway is amino-acid biosynthesis; L-leucine biosynthesis; L-leucine from 3-methyl-2-oxobutanoate: step 2/4. Functionally, catalyzes the isomerization between 2-isopropylmalate and 3-isopropylmalate, via the formation of 2-isopropylmaleate. The sequence is that of 3-isopropylmalate dehydratase large subunit from Rippkaea orientalis (strain PCC 8801 / RF-1) (Cyanothece sp. (strain PCC 8801)).